Consider the following 194-residue polypeptide: Flagellin A2 (194 aa).

A propeptide spanning residues 1–12 (MFEFITDEDERG) is cleaved from the precursor.

This sequence belongs to the archaeal flagellin family. Glycosylated.

The protein localises to the archaeal flagellum. In terms of biological role, flagellin is the subunit protein which polymerizes to form the filaments of archaeal flagella. The protein is Flagellin A2 (flaA2) of Halobacterium salinarum (strain ATCC 700922 / JCM 11081 / NRC-1) (Halobacterium halobium).